Consider the following 175-residue polypeptide: Transcription factor E (175 aa).

Positions 4–88 constitute an HTH TFE/IIEalpha-type domain; the sequence is AEDLFINLAK…YWKPNIDQIN (85 aa).

Belongs to the TFE family. In terms of assembly, monomer. Interaction with RNA polymerase subunits RpoF and RpoE is necessary for Tfe stimulatory transcription activity. Able to interact with Tbp and RNA polymerase in the absence of DNA promoter. Interacts both with the preinitiation and elongation complexes.

Transcription factor that plays a role in the activation of archaeal genes transcribed by RNA polymerase. Facilitates transcription initiation by enhancing TATA-box recognition by TATA-box-binding protein (Tbp), and transcription factor B (Tfb) and RNA polymerase recruitment. Not absolutely required for transcription in vitro, but particularly important in cases where Tbp or Tfb function is not optimal. It dynamically alters the nucleic acid-binding properties of RNA polymerases by stabilizing the initiation complex and destabilizing elongation complexes. Seems to translocate with the RNA polymerase following initiation and acts by binding to the non template strand of the transcription bubble in elongation complexes. This chain is Transcription factor E, found in Saccharolobus islandicus (strain Y.N.15.51 / Yellowstone #2) (Sulfolobus islandicus).